The chain runs to 671 residues: Carbohydrate acetyl esterase/feruloyl esterase (671 aa).

The signal sequence occupies residues 1-24 (MYQSTLKTILLASALLILPASMSA). A carbohydrate acetyl esterase region spans residues 1–296 (MYQSTLKTIL…YGEAVARHLG (296 aa)). Catalysis depends on for acetyl esterase activity residues S55, D271, and H274. Residues 297–671 (YEPKRPYIEM…NEFIPHLFKK (375 aa)) are feruloyl esterase.

The protein in the N-terminal section; belongs to the carbohydrate esterase 6 family.

It carries out the reaction feruloyl-polysaccharide + H2O = ferulate + polysaccharide.. It participates in glycan degradation; xylan degradation. Its function is as follows. Involved in degradation of plant cell wall polysaccharides. Bifunctional esterase that possesses both acetyl esterase and ferulic acid esterase activities. Has deacetylase activity towards acetylated xylo-oligosaccharides smaller than xylo-heptaose, as well as from glucose-pentaacetate. Is also able to release ferulic acid from methylferulate, and from the more natural substrates wheat bran, corn fiber, and XOS(FA,Ac), a corn fiber-derived substrate enriched in O-acetyl and ferulic acid esters. This chain is Carbohydrate acetyl esterase/feruloyl esterase, found in Xylanibacter ruminicola (strain ATCC 19189 / DSM 19721 / CIP 105475 / JCM 8958 / 23) (Prevotella ruminicola).